Consider the following 334-residue polypeptide: Nucleoid-associated protein PMI0825 (334 aa).

It belongs to the YejK family.

The protein resides in the cytoplasm. It is found in the nucleoid. The polypeptide is Nucleoid-associated protein PMI0825 (Proteus mirabilis (strain HI4320)).